Here is a 142-residue protein sequence, read N- to C-terminus: MIKKNKNDLNEMEYLVTQENGTEPPFQNEYWNHFEKGIYVDKISGKPLFTSEEKFESDCGWPSFSKALADEEIVELVDKTFGMVRTEVRSEDANSHLGHVFNDGPKESGGLRYCINSAAVQFIPYEKLEELGYGDLIPHFEK.

Residues 2–125 (IKKNKNDLNE…NSAAVQFIPY (124 aa)) enclose the MsrB domain. Catalysis depends on cysteine 114, which acts as the Nucleophile.

This sequence belongs to the MsrB Met sulfoxide reductase family.

It carries out the reaction L-methionyl-[protein] + [thioredoxin]-disulfide + H2O = L-methionyl-(R)-S-oxide-[protein] + [thioredoxin]-dithiol. The protein is Peptide methionine sulfoxide reductase MsrB of Staphylococcus saprophyticus subsp. saprophyticus (strain ATCC 15305 / DSM 20229 / NCIMB 8711 / NCTC 7292 / S-41).